A 463-amino-acid chain; its full sequence is Serine carboxypeptidase-like 32 (463 aa).

An N-terminal signal peptide occupies residues 1–22 (MMNISNVSIALYLCTLFAFVSS). 3 disulfide bridges follow: Cys-86–Cys-345, Cys-249–Cys-262, and Cys-286–Cys-313. The N-linked (GlcNAc...) asparagine glycan is linked to Asn-137. The active site involves Ser-179. Residues Asn-201 and Asn-250 are each glycosylated (N-linked (GlcNAc...) asparagine). N-linked (GlcNAc...) asparagine glycosylation is found at Asn-341 and Asn-354. Residues Asp-384 and His-436 contribute to the active site.

This sequence belongs to the peptidase S10 family. Expressed in flowers.

It localises to the secreted. Its function is as follows. Probable carboxypeptidase. This chain is Serine carboxypeptidase-like 32 (SCPL32), found in Arabidopsis thaliana (Mouse-ear cress).